Reading from the N-terminus, the 145-residue chain is Basic phospholipase A2 Vb-2 (145 aa).

The first 19 residues, M1–A19, serve as a signal peptide directing secretion. A propeptide spanning residues A20 to L27 is cleaved from the precursor. Cystine bridges form between C38–C97, C52–C144, C54–C70, C69–C125, C76–C118, C86–C111, and C104–C116. Y53, G55, and G57 together coordinate Ca(2+). H73 is an active-site residue. D74 provides a ligand contact to Ca(2+). D119 is a catalytic residue.

The cofactor is Ca(2+). Expressed by the venom gland.

It is found in the secreted. It carries out the reaction a 1,2-diacyl-sn-glycero-3-phosphocholine + H2O = a 1-acyl-sn-glycero-3-phosphocholine + a fatty acid + H(+). In terms of biological role, snake venom phospholipase A2 (PLA2) that has only a weak enzymatic activity. Inhibits neuromuscular transmission by blocking acetylcholine release from the nerve termini. PLA2 catalyzes the calcium-dependent hydrolysis of the 2-acyl groups in 3-sn-phosphoglycerides. The polypeptide is Basic phospholipase A2 Vb-2 (Bungarus fasciatus (Banded krait)).